The sequence spans 349 residues: GDSL esterase/lipase At1g58525 (349 aa).

The signal sequence occupies residues methionine 1–alanine 19. N-linked (GlcNAc...) asparagine glycosylation occurs at asparagine 25. The active-site Nucleophile is the serine 37. An N-linked (GlcNAc...) asparagine glycan is attached at asparagine 316. Active-site residues include aspartate 324 and histidine 327.

This sequence belongs to the 'GDSL' lipolytic enzyme family.

The protein resides in the secreted. This chain is GDSL esterase/lipase At1g58525, found in Arabidopsis thaliana (Mouse-ear cress).